The primary structure comprises 448 residues: Probable alpha-galactosidase B (448 aa).

A signal peptide spans 1 to 23 (MSRFHLPLAAAVVLVSCLWSANA). Cystine bridges form between Cys46–Cys78 and Cys128–Cys158. Residue Asp156 is the Nucleophile of the active site. Asn163 and Asn181 each carry an N-linked (GlcNAc...) asparagine glycan. Position 226-230 (226-230 (EWGQA)) interacts with substrate. Asn237 is a glycosylation site (N-linked (GlcNAc...) asparagine). Asp248 serves as the catalytic Proton donor.

The protein belongs to the glycosyl hydrolase 27 family.

It localises to the secreted. It carries out the reaction Hydrolysis of terminal, non-reducing alpha-D-galactose residues in alpha-D-galactosides, including galactose oligosaccharides, galactomannans and galactolipids.. Functionally, hydrolyzes a variety of simple alpha-D-galactoside as well as more complex molecules such as oligosaccharides and polysaccharides. In Aspergillus clavatus (strain ATCC 1007 / CBS 513.65 / DSM 816 / NCTC 3887 / NRRL 1 / QM 1276 / 107), this protein is Probable alpha-galactosidase B (aglB).